Reading from the N-terminus, the 405-residue chain is Tyrosine-protein phosphatase non-receptor type eak-6 (405 aa).

Residues 30 to 309 enclose the Tyrosine-protein phosphatase domain; the sequence is INQRINIIAD…SFIYDIIIKY (280 aa). The active-site Phosphocysteine intermediate is Cys248.

Belongs to the protein-tyrosine phosphatase family. As to expression, expressed in the 2 embryonic head hypodermal cells XXXL/R.

The protein localises to the cytoplasm. The protein resides in the cell membrane. It carries out the reaction O-phospho-L-tyrosyl-[protein] + H2O = L-tyrosyl-[protein] + phosphate. Putative phosphatase which, together with eak-4 and sdf-9, negatively regulates dauer larva formation downstream of insulin-like receptor daf-2 and in parallel of age-1, pdk-1 and akt-1. The protein is Tyrosine-protein phosphatase non-receptor type eak-6 of Caenorhabditis elegans.